A 569-amino-acid polypeptide reads, in one-letter code: MAVEQFPRKKVSRPHTEITVDTSGIGGSSSSSDKTLMLVGSAKGGKPDTVYRFRNYQQAKQVLRSGDLLDAIELAWNASDVNTASAGDILAVRVEDAKNATLTKGGLTFASTIYGVDANEIQVALEDNNLTHTKRLTVAFSKDGYKKVFDNLGKIFSIQYKGSEAQANFTIAQDSISKKATTLTLNVGSEPESTTEVMKYELGQGVYSETNVLVSAINSLPDWEAKFFPIGDKNLPTDALEAVTKVDVKTEAVFVGALAGDIAKQLEYNDYVTVAVDATKPVEDFELTNLTGGSDGTAPESWANKFPLLANEGGYYLVPLTDKQAVHSEALAFVKDRTDNGDPMRIIVGGGTNETVEESITRATNLRDPRASLVGFSGTRKMDDGRLLKLPGYMMASQIAGIASGLEVGEAITFKHFNVTSVDRVFESSQLDMLNESGVISIEFVRNRTLTAFRVVQDVTTYNDKSDPVKNEMSVGEANDFLVSELKIELDNNFIGTKVIDTSASLIKNFIQSFLDNKKRAREIQDYTPEEVQVVLEGDVASISMTVMPIRSLNKITVQLVYKQQILTA.

The interval 1-32 (MAVEQFPRKKVSRPHTEITVDTSGIGGSSSSS) is disordered.

Its subcellular location is the virion. This Enterococcus phage phiEF24C (Enterococcus bacteriophage phi-EF24C) protein is Putative tail sheath protein.